The primary structure comprises 275 residues: Tryptophan synthase alpha chain (275 aa).

Active-site proton acceptor residues include E58 and D69.

This sequence belongs to the TrpA family. In terms of assembly, tetramer of two alpha and two beta chains. Ubiquitously expressed at low levels in seedlings, roots, hypocotyls, cotyledons, stems, leaves, inflorescences, flowers, siliques and seeds.

It is found in the cytoplasm. It catalyses the reaction (1S,2R)-1-C-(indol-3-yl)glycerol 3-phosphate + L-serine = D-glyceraldehyde 3-phosphate + L-tryptophan + H2O. The enzyme catalyses (1S,2R)-1-C-(indol-3-yl)glycerol 3-phosphate = indole + D-glyceraldehyde 3-phosphate. Its pathway is amino-acid biosynthesis; L-tryptophan biosynthesis; L-tryptophan from chorismate: step 5/5. Functionally, the alpha subunit is responsible for the aldol cleavage of indoleglycerol phosphate to indole and glyceraldehyde 3-phosphate. Contributes to the tryptophan-independent indole biosynthesis, and possibly to auxin production. The sequence is that of Tryptophan synthase alpha chain (TRPA1) from Arabidopsis thaliana (Mouse-ear cress).